The following is a 381-amino-acid chain: Cobalt-precorrin-5B C(1)-methyltransferase (381 aa).

The protein belongs to the CbiD family.

The enzyme catalyses Co-precorrin-5B + S-adenosyl-L-methionine = Co-precorrin-6A + S-adenosyl-L-homocysteine. It functions in the pathway cofactor biosynthesis; adenosylcobalamin biosynthesis; cob(II)yrinate a,c-diamide from sirohydrochlorin (anaerobic route): step 6/10. Its function is as follows. Catalyzes the methylation of C-1 in cobalt-precorrin-5B to form cobalt-precorrin-6A. This Prochlorococcus marinus (strain SARG / CCMP1375 / SS120) protein is Cobalt-precorrin-5B C(1)-methyltransferase.